We begin with the raw amino-acid sequence, 258 residues long: Hydroxyacylglutathione hydrolase (258 aa).

7 residues coordinate Zn(2+): His-52, His-54, Asp-56, His-57, His-109, Asp-126, and His-164.

This sequence belongs to the metallo-beta-lactamase superfamily. Glyoxalase II family. In terms of assembly, monomer. Zn(2+) serves as cofactor.

It catalyses the reaction an S-(2-hydroxyacyl)glutathione + H2O = a 2-hydroxy carboxylate + glutathione + H(+). Its pathway is secondary metabolite metabolism; methylglyoxal degradation; (R)-lactate from methylglyoxal: step 2/2. Its function is as follows. Thiolesterase that catalyzes the hydrolysis of S-D-lactoyl-glutathione to form glutathione and D-lactic acid. This chain is Hydroxyacylglutathione hydrolase, found in Xylella fastidiosa (strain M23).